The primary structure comprises 359 residues: E2F transcription factor-like E2FD (359 aa).

DNA-binding regions lie at residues arginine 13 to glycine 78 and arginine 138 to glycine 217. Disordered regions lie at residues arginine 255–serine 274 and aspartate 288–arginine 313. Positions alanine 293–glycine 309 are enriched in polar residues.

This sequence belongs to the E2F/DP family. As to quaternary structure, monomer. No interactions with DPA or E2FA. As to expression, preferentially expressed in proliferating tissues. Highly expressed in young stalk and young flowers. Lower expression in young leaves and mature flowers. Detected in cotyledonary vascular tissues, the shoot apical meristem, the base of trichomes, the fully developed stomata, the central root cylinder and in the columella of lateral roots but not in the primary root tips or in the leaf epidermal cells.

It localises to the nucleus. In terms of biological role, inhibitor of E2F-dependent regulation of gene expression. Binds specifically the E2 recognition site as a monomer without interacting with DP proteins. May be up-regulating E2FA and down-regulating repressors of cell cycle progression. Promotes cell proliferation and represses cell elongation. Regulated by proteolysis via a ubiquitin-proteasome pathway. The polypeptide is E2F transcription factor-like E2FD (E2FD) (Arabidopsis thaliana (Mouse-ear cress)).